The following is a 213-amino-acid chain: Thiamine-phosphate synthase (213 aa).

4-amino-2-methyl-5-(diphosphooxymethyl)pyrimidine-binding positions include 39–43 (QYRDK) and D71. The Mg(2+) site is built by D72 and D91. S108 contributes to the 4-amino-2-methyl-5-(diphosphooxymethyl)pyrimidine binding site. 135–137 (TDT) contacts 2-[(2R,5Z)-2-carboxy-4-methylthiazol-5(2H)-ylidene]ethyl phosphate. K138 contacts 4-amino-2-methyl-5-(diphosphooxymethyl)pyrimidine. 2-[(2R,5Z)-2-carboxy-4-methylthiazol-5(2H)-ylidene]ethyl phosphate is bound by residues G165 and 185–186 (VS).

This sequence belongs to the thiamine-phosphate synthase family. It depends on Mg(2+) as a cofactor.

It carries out the reaction 2-[(2R,5Z)-2-carboxy-4-methylthiazol-5(2H)-ylidene]ethyl phosphate + 4-amino-2-methyl-5-(diphosphooxymethyl)pyrimidine + 2 H(+) = thiamine phosphate + CO2 + diphosphate. The enzyme catalyses 2-(2-carboxy-4-methylthiazol-5-yl)ethyl phosphate + 4-amino-2-methyl-5-(diphosphooxymethyl)pyrimidine + 2 H(+) = thiamine phosphate + CO2 + diphosphate. The catalysed reaction is 4-methyl-5-(2-phosphooxyethyl)-thiazole + 4-amino-2-methyl-5-(diphosphooxymethyl)pyrimidine + H(+) = thiamine phosphate + diphosphate. Its pathway is cofactor biosynthesis; thiamine diphosphate biosynthesis; thiamine phosphate from 4-amino-2-methyl-5-diphosphomethylpyrimidine and 4-methyl-5-(2-phosphoethyl)-thiazole: step 1/1. In terms of biological role, condenses 4-methyl-5-(beta-hydroxyethyl)thiazole monophosphate (THZ-P) and 2-methyl-4-amino-5-hydroxymethyl pyrimidine pyrophosphate (HMP-PP) to form thiamine monophosphate (TMP). The protein is Thiamine-phosphate synthase of Thermoplasma acidophilum (strain ATCC 25905 / DSM 1728 / JCM 9062 / NBRC 15155 / AMRC-C165).